The sequence spans 434 residues: UDP-N-acetylglucosamine 1-carboxyvinyltransferase (434 aa).

Residue 22–23 (KN) coordinates phosphoenolpyruvate. Arg93 is a UDP-N-acetyl-alpha-D-glucosamine binding site. The active-site Proton donor is Cys117. 2-(S-cysteinyl)pyruvic acid O-phosphothioketal is present on Cys117. The UDP-N-acetyl-alpha-D-glucosamine site is built by Asp307 and Val329.

This sequence belongs to the EPSP synthase family. MurA subfamily.

It localises to the cytoplasm. It catalyses the reaction phosphoenolpyruvate + UDP-N-acetyl-alpha-D-glucosamine = UDP-N-acetyl-3-O-(1-carboxyvinyl)-alpha-D-glucosamine + phosphate. Its pathway is cell wall biogenesis; peptidoglycan biosynthesis. Its function is as follows. Cell wall formation. Adds enolpyruvyl to UDP-N-acetylglucosamine. In Coxiella burnetii (strain CbuG_Q212) (Coxiella burnetii (strain Q212)), this protein is UDP-N-acetylglucosamine 1-carboxyvinyltransferase.